Consider the following 428-residue polypeptide: tRNA(Ile)-lysidine synthase (428 aa).

An ATP-binding site is contributed by 28-33; that stretch reads SGGVDS.

This sequence belongs to the tRNA(Ile)-lysidine synthase family.

It is found in the cytoplasm. It catalyses the reaction cytidine(34) in tRNA(Ile2) + L-lysine + ATP = lysidine(34) in tRNA(Ile2) + AMP + diphosphate + H(+). Ligates lysine onto the cytidine present at position 34 of the AUA codon-specific tRNA(Ile) that contains the anticodon CAU, in an ATP-dependent manner. Cytidine is converted to lysidine, thus changing the amino acid specificity of the tRNA from methionine to isoleucine. This is tRNA(Ile)-lysidine synthase from Streptococcus pyogenes serotype M6 (strain ATCC BAA-946 / MGAS10394).